Here is a 987-residue protein sequence, read N- to C-terminus: KAT8 regulatory NSL complex subunit 1-like protein (987 aa).

A Glycyl lysine isopeptide (Lys-Gly) (interchain with G-Cter in SUMO2) cross-link involves residue Lys-134. The residue at position 462 (Ser-462) is a Phosphoserine. The interval 708–738 is disordered; sequence RKKRHLSETALGERTKLEESDFQHTESGSHS. Residues 718–731 show a composition bias toward basic and acidic residues; sequence LGERTKLEESDFQH. In terms of domain architecture, PEHE spans 794-915; it reads EILTPSWRMV…QSQETKSLWW (122 aa). The residue at position 859 (Lys-859) is an N6-acetyllysine. The tract at residues 949–972 is disordered; that stretch reads GEIFGTSVPENGHHPKKQSDGMEE. Positions 959-972 are enriched in basic and acidic residues; the sequence is NGHHPKKQSDGMEE.

In terms of processing, acetylated on lysine residues by KAT8 upon ionizing radiation-induced DNA damage; deacetylated by HDAC3.

The sequence is that of KAT8 regulatory NSL complex subunit 1-like protein (KANSL1L) from Homo sapiens (Human).